Reading from the N-terminus, the 101-residue chain is Feather keratin Cos2-2 (101 aa).

Ser-2 carries the N-acetylserine modification.

The protein belongs to the avian keratin family. As to quaternary structure, the avian keratins (F-ker, S-ker, C-ker and B-ker) are a complex mixture of very similar polypeptides.

This chain is Feather keratin Cos2-2, found in Columba livia (Rock dove).